Here is a 279-residue protein sequence, read N- to C-terminus: Pantothenate synthetase (279 aa).

Position 31–38 (M31–H38) interacts with ATP. H38 functions as the Proton donor in the catalytic mechanism. Q62 is a (R)-pantoate binding site. Q62 is a binding site for beta-alanine. Residue G150–D153 participates in ATP binding. A (R)-pantoate-binding site is contributed by Q156. Residues V179 and K187–R190 each bind ATP.

Belongs to the pantothenate synthetase family. As to quaternary structure, homodimer.

It localises to the cytoplasm. It carries out the reaction (R)-pantoate + beta-alanine + ATP = (R)-pantothenate + AMP + diphosphate + H(+). The protein operates within cofactor biosynthesis; (R)-pantothenate biosynthesis; (R)-pantothenate from (R)-pantoate and beta-alanine: step 1/1. In terms of biological role, catalyzes the condensation of pantoate with beta-alanine in an ATP-dependent reaction via a pantoyl-adenylate intermediate. This is Pantothenate synthetase from Stenotrophomonas maltophilia (strain K279a).